Consider the following 61-residue polypeptide: MNEAYHSIQTLLNKMDRQMKTVKEAIEEKDLQRAHRNLINLADNNEELMQEIRWVKKGTIL.

The stretch at 7–57 (SIQTLLNKMDRQMKTVKEAIEEKDLQRAHRNLINLADNNEELMQEIRWVKK) forms a coiled coil.

The protein is SPbeta prophage-derived uncharacterized protein YotK (yotK) of Bacillus subtilis (strain 168).